A 242-amino-acid chain; its full sequence is Small ribosomal subunit protein uS2 (242 aa).

This sequence belongs to the universal ribosomal protein uS2 family.

This Shewanella putrefaciens (strain CN-32 / ATCC BAA-453) protein is Small ribosomal subunit protein uS2.